The sequence spans 269 residues: Phosphate import ATP-binding protein PstB (269 aa).

In terms of domain architecture, ABC transporter spans 22 to 264 (AEVRDLNFYY…PVQQKTADYV (243 aa)). ATP is bound at residue 54–61 (GPSGCGKT).

It belongs to the ABC transporter superfamily. Phosphate importer (TC 3.A.1.7) family. The complex is composed of two ATP-binding proteins (PstB), two transmembrane proteins (PstC and PstA) and a solute-binding protein (PstS).

The protein resides in the cell inner membrane. The enzyme catalyses phosphate(out) + ATP + H2O = ADP + 2 phosphate(in) + H(+). Part of the ABC transporter complex PstSACB involved in phosphate import. Responsible for energy coupling to the transport system. The chain is Phosphate import ATP-binding protein PstB from Thermosynechococcus vestitus (strain NIES-2133 / IAM M-273 / BP-1).